The following is a 213-amino-acid chain: Probable nicotinate-nucleotide adenylyltransferase (213 aa).

Belongs to the NadD family.

It carries out the reaction nicotinate beta-D-ribonucleotide + ATP + H(+) = deamido-NAD(+) + diphosphate. The protein operates within cofactor biosynthesis; NAD(+) biosynthesis; deamido-NAD(+) from nicotinate D-ribonucleotide: step 1/1. Its function is as follows. Catalyzes the reversible adenylation of nicotinate mononucleotide (NaMN) to nicotinic acid adenine dinucleotide (NaAD). This chain is Probable nicotinate-nucleotide adenylyltransferase, found in Shigella boydii serotype 18 (strain CDC 3083-94 / BS512).